The sequence spans 663 residues: UvrABC system protein B (663 aa).

Residues 31–271 (DNIEGGEKAQ…EASIAKIQAE (241 aa)) form the Helicase ATP-binding domain. 44-51 (GATGTGKT) lines the ATP pocket. The short motif at 97-120 (YYDYYQPEAYVPSSDTYIEKDSSV) is the Beta-hairpin element. The Helicase C-terminal domain occupies 435-601 (QMDDLLGEIN…TIKKEIRDLI (167 aa)). In terms of domain architecture, UVR spans 627–662 (QEAIKKLQKQMHEAAELLDFELAAQIRDMVLELKSM).

This sequence belongs to the UvrB family. As to quaternary structure, forms a heterotetramer with UvrA during the search for lesions. Interacts with UvrC in an incision complex.

Its subcellular location is the cytoplasm. In terms of biological role, the UvrABC repair system catalyzes the recognition and processing of DNA lesions. A damage recognition complex composed of 2 UvrA and 2 UvrB subunits scans DNA for abnormalities. Upon binding of the UvrA(2)B(2) complex to a putative damaged site, the DNA wraps around one UvrB monomer. DNA wrap is dependent on ATP binding by UvrB and probably causes local melting of the DNA helix, facilitating insertion of UvrB beta-hairpin between the DNA strands. Then UvrB probes one DNA strand for the presence of a lesion. If a lesion is found the UvrA subunits dissociate and the UvrB-DNA preincision complex is formed. This complex is subsequently bound by UvrC and the second UvrB is released. If no lesion is found, the DNA wraps around the other UvrB subunit that will check the other stand for damage. In Streptococcus uberis (strain ATCC BAA-854 / 0140J), this protein is UvrABC system protein B.